Consider the following 370-residue polypeptide: Flagellar P-ring protein (370 aa).

An N-terminal signal peptide occupies residues 1 to 21; the sequence is MKLLLFILMISSIIIVPVGQA.

Belongs to the FlgI family. As to quaternary structure, the basal body constitutes a major portion of the flagellar organelle and consists of four rings (L,P,S, and M) mounted on a central rod.

Its subcellular location is the periplasm. It is found in the bacterial flagellum basal body. Assembles around the rod to form the L-ring and probably protects the motor/basal body from shearing forces during rotation. In Pseudoalteromonas atlantica (strain T6c / ATCC BAA-1087), this protein is Flagellar P-ring protein.